Reading from the N-terminus, the 452-residue chain is Cysteine--tRNA ligase (452 aa).

Cys35 contributes to the Zn(2+) binding site. Positions 37–47 (PTVYDRAHLGN) match the 'HIGH' region motif. The Zn(2+) site is built by Cys215, His240, and Glu244. The 'KMSKS' region signature appears at 273–277 (KMSKS). Lys276 is a binding site for ATP.

Belongs to the class-I aminoacyl-tRNA synthetase family. As to quaternary structure, monomer. Requires Zn(2+) as cofactor.

The protein localises to the cytoplasm. It carries out the reaction tRNA(Cys) + L-cysteine + ATP = L-cysteinyl-tRNA(Cys) + AMP + diphosphate. In Gluconobacter oxydans (strain 621H) (Gluconobacter suboxydans), this protein is Cysteine--tRNA ligase.